The chain runs to 454 residues: GA-binding protein alpha chain (454 aa).

One can recognise a PNT domain in the interval 168–251 (AALEGYRKEQ…SHLELLRKYV (84 aa)). The tract at residues 297–316 (QRAPRISGEDRSSPGNRTGN) is disordered. A Phosphoserine modification is found at S303. The ETS DNA-binding region spans 320 to 400 (IQLWQFLLEL…QGKRFVYKFV (81 aa)).

The protein belongs to the ETS family. Heterotetramer of two alpha and two beta subunits.

The protein localises to the nucleus. Functionally, transcription factor capable of interacting with purine rich repeats (GA repeats). Positively regulates transcription of transcriptional repressor RHIT/ZNF205. Its function is as follows. (Microbial infection) Necessary for the expression of the Adenovirus E4 gene. This chain is GA-binding protein alpha chain (GABPA), found in Homo sapiens (Human).